Here is a 182-residue protein sequence, read N- to C-terminus: Vomeronasal secretory protein 1 (182 aa).

An N-terminal signal peptide occupies residues 1-18 (MRALLLIISFCLVAVLQA). N-linked (GlcNAc...) asparagine glycosylation occurs at Asn-30. The cysteines at positions 76 and 168 are disulfide-linked.

Belongs to the calycin superfamily. Lipocalin family. As to expression, specifically expressed in vomeronasal and posterior glands of the nasal septum, the ducts of which open into the lumen of the vomeronasal organ.

It localises to the secreted. Functionally, transport of lipophilic molecules, possible pheromone-carrier. This is Vomeronasal secretory protein 1 (Lcn3) from Mus musculus (Mouse).